Here is a 368-residue protein sequence, read N- to C-terminus: Methylthioribose-1-phosphate isomerase (368 aa).

Substrate-binding positions include 54–56 (RGA), R91, and Q204. D245 functions as the Proton donor in the catalytic mechanism. Substrate is bound at residue 255-256 (NK).

The protein belongs to the eIF-2B alpha/beta/delta subunits family. MtnA subfamily.

The catalysed reaction is 5-(methylsulfanyl)-alpha-D-ribose 1-phosphate = 5-(methylsulfanyl)-D-ribulose 1-phosphate. It participates in amino-acid biosynthesis; L-methionine biosynthesis via salvage pathway; L-methionine from S-methyl-5-thio-alpha-D-ribose 1-phosphate: step 1/6. In terms of biological role, catalyzes the interconversion of methylthioribose-1-phosphate (MTR-1-P) into methylthioribulose-1-phosphate (MTRu-1-P). This Gluconobacter oxydans (strain 621H) (Gluconobacter suboxydans) protein is Methylthioribose-1-phosphate isomerase.